A 158-amino-acid polypeptide reads, in one-letter code: Deoxyuridine 5'-triphosphate nucleotidohydrolase (158 aa).

Substrate-binding positions include 66–68 (RSG), asparagine 79, 83–85 (TID), and lysine 93. Positions 139–158 (RGFGSSGVARKGHYQGKPLA) are disordered.

Belongs to the dUTPase family. It depends on Mg(2+) as a cofactor.

The catalysed reaction is dUTP + H2O = dUMP + diphosphate + H(+). It participates in pyrimidine metabolism; dUMP biosynthesis; dUMP from dCTP (dUTP route): step 2/2. In terms of biological role, this enzyme is involved in nucleotide metabolism: it produces dUMP, the immediate precursor of thymidine nucleotides and it decreases the intracellular concentration of dUTP so that uracil cannot be incorporated into DNA. The sequence is that of Deoxyuridine 5'-triphosphate nucleotidohydrolase from Helicobacter hepaticus (strain ATCC 51449 / 3B1).